A 166-amino-acid polypeptide reads, in one-letter code: Small ribosomal subunit protein uS5 (166 aa).

Residues 11–74 enclose the S5 DRBM domain; sequence FLEKLIAVNR…EKARRNMVDV (64 aa).

It belongs to the universal ribosomal protein uS5 family. Part of the 30S ribosomal subunit. Contacts proteins S4 and S8.

In terms of biological role, with S4 and S12 plays an important role in translational accuracy. Its function is as follows. Located at the back of the 30S subunit body where it stabilizes the conformation of the head with respect to the body. The protein is Small ribosomal subunit protein uS5 of Alteromonas mediterranea (strain DSM 17117 / CIP 110805 / LMG 28347 / Deep ecotype).